A 556-amino-acid chain; its full sequence is Adenine deaminase (556 aa).

This sequence belongs to the metallo-dependent hydrolases superfamily. Adenine deaminase family. Mn(2+) is required as a cofactor.

It catalyses the reaction adenine + H2O + H(+) = hypoxanthine + NH4(+). This Methanocaldococcus jannaschii (strain ATCC 43067 / DSM 2661 / JAL-1 / JCM 10045 / NBRC 100440) (Methanococcus jannaschii) protein is Adenine deaminase.